Here is a 90-residue protein sequence, read N- to C-terminus: Protein PRAC2 (90 aa).

In terms of tissue distribution, highly expressed in prostate and testis. Also detected in placenta, muscle, colon, peripheral blood leukocytes and skin.

The protein localises to the nucleus. The sequence is that of Protein PRAC2 from Homo sapiens (Human).